The sequence spans 383 residues: MVRQLILISSLLAAVAVRAPADPAHPMVTEAPDVNLVEKRATTCTFSGSEGASKASKSKTSCSTIYLSDVAVPSGTTLDLSDLNDGTHVIFQGETTFGYEEWEGPLVRVSGTDITVEGESDAVLNGDGSRWWDGEGGNGGKTKPKFFYAHDLTSSTIKSIYIENSPVQVFSIDGSTDLTMTDITVDNTDGDTDDLAANTDGFDIGESTYITITGAEIYNQDDCVAINSGENIYFSASVCSGGHGLSIGSVGGRDDNTVKNVTFYDVNVLKSQQAIRIKTIYGDTGSVSEVTYHEIAFSDATDYGIVIEQNYDDTSKTPTTGVPITDFVLENIVGTCEDDDCTEVYIACGDGSCSDWTWTGVSVTGGSVSDDCLNVPSGISCDL.

The N-terminal stretch at 1-16 (MVRQLILISSLLAAVA) is a signal peptide. Residues 17–40 (VRAPADPAHPMVTEAPDVNLVEKR) constitute a propeptide that is removed on maturation. Cys44 and Cys62 are joined by a disulfide. 2 PbH1 repeats span residues 175 to 206 (STDL…DIGE) and 207 to 228 (STYI…AINS). Asp221 acts as the Proton donor in catalysis. Residues Cys223 and Cys239 are joined by a disulfide bond. His243 is a catalytic residue. 2 PbH1 repeats span residues 253 to 279 (RDDN…RIKT) and 287 to 309 (VSEV…VIEQ). An N-linked (GlcNAc...) asparagine glycan is attached at Asn260. Intrachain disulfides connect Cys348–Cys353 and Cys372–Cys381.

This sequence belongs to the glycosyl hydrolase 28 family.

The protein localises to the secreted. The catalysed reaction is (1,4-alpha-D-galacturonosyl)n+m + H2O = (1,4-alpha-D-galacturonosyl)n + (1,4-alpha-D-galacturonosyl)m.. Its function is as follows. Involved in maceration and soft-rotting of plant tissue. Hydrolyzes the 1,4-alpha glycosidic bonds of de-esterified pectate in the smooth region of the plant cell wall. The polypeptide is Probable endopolygalacturonase C (pgaC) (Aspergillus niger).